The primary structure comprises 543 residues: Chaperonin GroEL (543 aa).

ATP is bound by residues 29–32, 86–90, Gly-413, 476–478, and Asp-492; these read TLGP, DGTTT, and NAA.

It belongs to the chaperonin (HSP60) family. In terms of assembly, forms a cylinder of 14 subunits composed of two heptameric rings stacked back-to-back. Interacts with the co-chaperonin GroES.

It localises to the cytoplasm. It catalyses the reaction ATP + H2O + a folded polypeptide = ADP + phosphate + an unfolded polypeptide.. Functionally, together with its co-chaperonin GroES, plays an essential role in assisting protein folding. The GroEL-GroES system forms a nano-cage that allows encapsulation of the non-native substrate proteins and provides a physical environment optimized to promote and accelerate protein folding. This is Chaperonin GroEL from Streptococcus pyogenes serotype M1.